The chain runs to 390 residues: Cell division protein FtsZ (390 aa).

GTP-binding positions include 21-25 (GGGNN), 108-110 (GTG), Glu-139, Arg-143, and Asp-187. Residues 315–390 (FDDKPTSHGR…EERRSRRTRR (76 aa)) are disordered. The segment covering 326–360 (SGSTGFGTSVNTSSNATSKDESFTSNSSNAQATDS) has biased composition (polar residues). Positions 361-384 (VSERTHTTKEDDIPSFIRNREERR) are enriched in basic and acidic residues.

Belongs to the FtsZ family. In terms of assembly, homodimer. Polymerizes to form a dynamic ring structure in a strictly GTP-dependent manner. Interacts directly with several other division proteins.

The protein resides in the cytoplasm. Essential cell division protein that forms a contractile ring structure (Z ring) at the future cell division site. The regulation of the ring assembly controls the timing and the location of cell division. One of the functions of the FtsZ ring is to recruit other cell division proteins to the septum to produce a new cell wall between the dividing cells. Binds GTP and shows GTPase activity. This chain is Cell division protein FtsZ, found in Staphylococcus aureus (strain NCTC 8325 / PS 47).